The sequence spans 100 residues: MHLMPREQEKLMIVVAADLARRRQSRGLKLNYPEAVAIISYELIEGARDGRTVADLMSYGTTILTREDVMEGVPEMIHDVQIEATFPDGTKLVTVHDPIR.

This sequence belongs to the urease gamma subunit family. Heterotrimer of UreA (gamma), UreB (beta) and UreC (alpha) subunits. Three heterotrimers associate to form the active enzyme.

It is found in the cytoplasm. The catalysed reaction is urea + 2 H2O + H(+) = hydrogencarbonate + 2 NH4(+). It participates in nitrogen metabolism; urea degradation; CO(2) and NH(3) from urea (urease route): step 1/1. The sequence is that of Urease subunit gamma from Pseudarthrobacter chlorophenolicus (strain ATCC 700700 / DSM 12829 / CIP 107037 / JCM 12360 / KCTC 9906 / NCIMB 13794 / A6) (Arthrobacter chlorophenolicus).